Reading from the N-terminus, the 302-residue chain is Meiotically up-regulated gene 129 protein (302 aa).

Functionally, has a role in meiosis. This chain is Meiotically up-regulated gene 129 protein (mug129), found in Schizosaccharomyces pombe (strain 972 / ATCC 24843) (Fission yeast).